Here is a 793-residue protein sequence, read N- to C-terminus: uncharacterized protein (793 aa).

Residues 1–21 (MLKKTLLAYTIGFAFSPPANA) form the signal peptide. Cys-769 and Cys-792 form a disulfide bridge.

It belongs to the fimbrial export usher family.

Its subcellular location is the cell outer membrane. Involved in the export and assembly of a fimbrial subunit across the outer membrane. This is an uncharacterized protein from Escherichia coli (strain K12).